The sequence spans 404 residues: Cysteine desulfurase IscS (404 aa).

Residues 75-76 (AT), asparagine 155, glutamine 183, and 203-205 (SAH) contribute to the pyridoxal 5'-phosphate site. Position 206 is an N6-(pyridoxal phosphate)lysine (lysine 206). Residue threonine 243 coordinates pyridoxal 5'-phosphate. Cysteine 328 acts as the Cysteine persulfide intermediate in catalysis. [2Fe-2S] cluster is bound at residue cysteine 328.

This sequence belongs to the class-V pyridoxal-phosphate-dependent aminotransferase family. NifS/IscS subfamily. Homodimer. Forms a heterotetramer with IscU, interacts with other sulfur acceptors. Pyridoxal 5'-phosphate serves as cofactor.

Its subcellular location is the cytoplasm. It catalyses the reaction (sulfur carrier)-H + L-cysteine = (sulfur carrier)-SH + L-alanine. It functions in the pathway cofactor biosynthesis; iron-sulfur cluster biosynthesis. Functionally, master enzyme that delivers sulfur to a number of partners involved in Fe-S cluster assembly, tRNA modification or cofactor biosynthesis. Catalyzes the removal of elemental sulfur atoms from cysteine to produce alanine. Functions as a sulfur delivery protein for Fe-S cluster synthesis onto IscU, an Fe-S scaffold assembly protein, as well as other S acceptor proteins. This chain is Cysteine desulfurase IscS, found in Pseudomonas syringae pv. tomato (strain ATCC BAA-871 / DC3000).